The following is a 349-amino-acid chain: tRNA pseudouridine synthase D (349 aa).

A substrate-binding site is contributed by Phe-26. Asp-79 serves as the catalytic Nucleophile. Asn-128 contributes to the substrate binding site. A TRUD domain is found at 154–302 (GVPNYFGSQR…VEGARRAILL (149 aa)). Phe-328 lines the substrate pocket.

The protein belongs to the pseudouridine synthase TruD family.

The catalysed reaction is uridine(13) in tRNA = pseudouridine(13) in tRNA. Responsible for synthesis of pseudouridine from uracil-13 in transfer RNAs. The protein is tRNA pseudouridine synthase D of Yersinia enterocolitica serotype O:8 / biotype 1B (strain NCTC 13174 / 8081).